The primary structure comprises 535 residues: Major glycerophosphoinositol permease GIT3 (535 aa).

A helical transmembrane segment spans residues 49–69; sequence VVTSVKANSLWPAFASGAGLF. Asparagine 75 carries N-linked (GlcNAc...) asparagine glycosylation. 5 consecutive transmembrane segments (helical) span residues 101–121, 137–157, 165–185, 204–224, and 232–252; these read NIASIAFVGTVVGQLGFGYIS, LIFFTLMCAVGSWGVTVQGFF, FFLGVAIGAEYPTSSVIASEF, AMIDSGFVVSAFVPFVLIWIF, and LWRVAIGLGVIPPLSLFFMRL. N-linked (GlcNAc...) asparagine glycosylation is present at asparagine 256. The next 6 membrane-spanning stretches (helical) occupy residues 275-295, 324-344, 352-372, 378-398, 419-439, and 455-475; these read WWLIVKFYWFRLTIVSLIWFI, WGWSIVFNLFYIPGAFLGAIS, LTLALGVGIQGVIGIAMSACL, HIAGFVVVFGIFTTFGEFGPG, GIAAAIGKIGAFVGTWVFPAI, and VPFYISSALCLFSACLAIFFC. N-linked (GlcNAc...) asparagine glycosylation is present at asparagine 532.

This sequence belongs to the major facilitator superfamily. Sugar transporter (TC 2.A.1.1) family.

It localises to the cell membrane. It catalyses the reaction sn-glycerol 3-phosphocholine(out) = sn-glycerol 3-phosphocholine(in). Its function is as follows. Glycerophosphodiester transporter that mediates uptake of glycerophosphocholine (GroPCho) with GIT4. GIT3 acts as the major GroPCho permease. Does not possess detectable glycerophosphoinositol (GroPIns) transport activity. The expanded ability to utilize GroPIns and GroPCho results from the organism's pathogenic nature and its need to occupy a variety of environments within its host organism. This possibility is buttressed by the fact that GroPIns and GroPCho are present and abundant in human fluids. This chain is Major glycerophosphoinositol permease GIT3, found in Candida albicans (strain SC5314 / ATCC MYA-2876) (Yeast).